We begin with the raw amino-acid sequence, 231 residues long: Large ribosomal subunit protein uL1 (231 aa).

Belongs to the universal ribosomal protein uL1 family. In terms of assembly, part of the 50S ribosomal subunit.

Binds directly to 23S rRNA. The L1 stalk is quite mobile in the ribosome, and is involved in E site tRNA release. Its function is as follows. Protein L1 is also a translational repressor protein, it controls the translation of the L11 operon by binding to its mRNA. This is Large ribosomal subunit protein uL1 from Alkalilimnicola ehrlichii (strain ATCC BAA-1101 / DSM 17681 / MLHE-1).